Here is a 178-residue protein sequence, read N- to C-terminus: MIMSKEKLIKSIREIPDFPIPGILFYDVTTLFKDSERLQELSDIMYEMYKDKGITKVVGIESRGFIMGPILATRLGAGFIPIRKPGKLPAETMEESYDKEYGKDTVQIHKDALNENDVVLLHDDLLATGGTMKAACNLVKKLYPKKVYVNFIIELKELNGKQVFENDQDVDIQSVLSL.

Belongs to the purine/pyrimidine phosphoribosyltransferase family. Homodimer.

It is found in the cytoplasm. The enzyme catalyses AMP + diphosphate = 5-phospho-alpha-D-ribose 1-diphosphate + adenine. The protein operates within purine metabolism; AMP biosynthesis via salvage pathway; AMP from adenine: step 1/1. In terms of biological role, catalyzes a salvage reaction resulting in the formation of AMP, that is energically less costly than de novo synthesis. This is Adenine phosphoribosyltransferase from Bacteroides fragilis (strain YCH46).